Consider the following 201-residue polypeptide: Ras-related protein Rab-9A (201 aa).

The residue at position 2 (Ala-2) is an N-acetylalanine. Residues Gly-17, Val-18, Gly-19, Lys-20, Ser-21, Ser-22, Asp-33, Ser-34, His-38, and Thr-39 each contribute to the GTP site. Ser-21 provides a ligand contact to Mg(2+). A Switch 1 motif is present at residues 31-42; the sequence is KFDSQLFHTIGV. A Phosphoserine modification is found at Ser-34. Residues Thr-39 and Asp-62 each contribute to the Mg(2+) site. The short motif at 64–78 is the Switch 2 element; that stretch reads AGQERFRSLRTPFYR. Positions 65, 124, 125, 127, 155, and 156 each coordinate GTP. At Ser-179 the chain carries Phosphoserine. Thr-187 bears the Phosphothreonine mark. 2 S-geranylgeranyl cysteine lipidation sites follow: Cys-200 and Cys-201.

It belongs to the small GTPase superfamily. Rab family. As to quaternary structure, interacts (preferentially in its GTP-bound form) with GCC2 (via its GRIP domain). Interacts (GTP-bound form) with SGSM1; the GDP-bound form has much lower affinity for SGSM1. Interacts with SGSM2. The GTP-bound form but not the GDP-bound form interacts with HPS4. The GTP-bound form but not the GDP-bound form interacts with BLOC-3 complex (heterodimer of HPS1 and HPS4) but does not interact with HPS1 alone. Interacts (GTP-bound form) with NDE1; two RAB9A-GTP molecules lie on the opposite sides of the NDE1 homodimer; the interaction leads to RAB9A-dynein motor tethering. Interacts (GTP-bound form) with NDEL1. Mg(2+) serves as cofactor.

Its subcellular location is the cell membrane. The protein localises to the endoplasmic reticulum membrane. It localises to the golgi apparatus membrane. It is found in the late endosome. The protein resides in the cytoplasmic vesicle. Its subcellular location is the phagosome membrane. The protein localises to the phagosome. It localises to the cytoplasmic vesicle membrane. It is found in the melanosome. It catalyses the reaction GTP + H2O = GDP + phosphate + H(+). With respect to regulation, regulated by guanine nucleotide exchange factors (GEFs) which promote the exchange of bound GDP for free GTP. Regulated by GTPase activating proteins (GAPs) which increase the GTP hydrolysis activity. Inhibited by GDP dissociation inhibitors (GDIs). Functionally, the small GTPases Rab are key regulators of intracellular membrane trafficking, from the formation of transport vesicles to their fusion with membranes. Rabs cycle between an inactive GDP-bound form and an active GTP-bound form that is able to recruit to membranes different sets of downstream effectors directly responsible for vesicle formation, movement, tethering and fusion. RAB9A is involved in the transport of proteins between the endosomes and the trans-Golgi network (TGN). Specifically uses NDE1/NDEL1 as an effector to interact with the dynein motor complex in order to control retrograde trafficking of RAB9-associated late endosomes to the TGN. Involved in the recruitment of SGSM2 to melanosomes and is required for the proper trafficking of melanogenic enzymes TYR, TYRP1 and DCT/TYRP2 to melanosomes in melanocytes. This Mus musculus (Mouse) protein is Ras-related protein Rab-9A.